A 352-amino-acid polypeptide reads, in one-letter code: C-C chemokine receptor type 5 (352 aa).

At 1–30 (MDYQVSSPTYDIDYYTSEPCQKINVKQIAA) the chain is on the extracellular side. Y3 is modified (sulfotyrosine). 2 O-linked (GalNAc...) serine glycosylation sites follow: S6 and S7. A sulfotyrosine mark is found at Y10, Y14, and Y15. 2 cysteine pairs are disulfide-bonded: C20–C269 and C101–C178. The helical transmembrane segment at 31–58 (RLLPPLYSLVFIFGFVGNILVVLILINC) threads the bilayer. At 59–68 (KRLKSMTDIY) the chain is on the cytoplasmic side. A helical transmembrane segment spans residues 69-89 (LLNLAISDLLFLLTVPFWAHY). Over 90-102 (AAAQWDFGNTMCQ) the chain is Extracellular. The helical transmembrane segment at 103 to 124 (LLTGLYFIGFFSGIFFIILLTI) threads the bilayer. At 125–141 (DRYLAIVHAVFALKART) the chain is on the cytoplasmic side. A helical membrane pass occupies residues 142 to 166 (VTFGVVTSVITWVVAVFASLPGIIF). Over 167–198 (TRSQREGLHYTCSSHFPYSQYQFWKNFQTLKM) the chain is Extracellular. A helical membrane pass occupies residues 199–218 (VILGLVLPLLVMVICYSGIL). Topologically, residues 219–235 (KTLLRCRNEKKRHRAVR) are cytoplasmic. Residues 236–260 (LIFTIMIVYFLFWAPYNIVLLLNTF) form a helical membrane-spanning segment. Residues 261–277 (QEFFGLNNCSSSNRLDQ) lie on the Extracellular side of the membrane. The helical transmembrane segment at 278–301 (AMQVTETLGMTHCCINPIIYAFVG) threads the bilayer. Residues 302–352 (EKFRNYLLVFFQKHIAKRFCKCCSIFQQEAPERASSVYTRSTGEQEISVGL) are Cytoplasmic-facing. Residues C321, C323, and C324 are each lipidated (S-palmitoyl cysteine). Residues S336, S337, S342, and S349 each carry the phosphoserine; by BARK1 modification.

It belongs to the G-protein coupled receptor 1 family. In terms of assembly, interacts with PRAF2. Efficient ligand binding to CCL3/MIP-1alpha and CCL4/MIP-1beta requires sulfation, O-glycosylation and sialic acid modifications. Glycosylation on Ser-6 is required for efficient binding of CCL4. Interacts with GRK2. Interacts with ARRB1 and ARRB2. Interacts with CNIH4. Interacts with S100A4; this interaction stimulates T-lymphocyte chemotaxis. In terms of processing, sulfated on at least 2 of the N-terminal tyrosines. Sulfation is required for efficient binding of the chemokines, CCL3 and CCL4. Post-translationally, palmitoylation in the C-terminal is important for cell surface expression. Phosphorylation on serine residues in the C-terminal is stimulated by binding CC chemokines especially by APO-RANTES. In terms of processing, O-glycosylated, but not N-glycosylated. Ser-6 appears to be the major site even if Ser-7 may be also O-glycosylated. Also sialylated glycans present which contribute to chemokine binding. Thr-16 and Ser-17 may also be glycosylated and, if so, with small moieties such as a T-antigen.

Its subcellular location is the cell membrane. Functionally, receptor for a number of inflammatory CC-chemokines including CCL3/MIP-1-alpha, CCL4/MIP-1-beta and RANTES and subsequently transduces a signal by increasing the intracellular calcium ion level. May play a role in the control of granulocytic lineage proliferation or differentiation. Participates in T-lymphocyte migration to the infection site by acting as a chemotactic receptor. This chain is C-C chemokine receptor type 5 (CCR5), found in Macaca fascicularis (Crab-eating macaque).